The chain runs to 267 residues: Hydroxyethylthiazole kinase (267 aa).

Met46 lines the substrate pocket. Residues Arg122 and Ser168 each contribute to the ATP site. Gly195 lines the substrate pocket.

The protein belongs to the Thz kinase family. Requires Mg(2+) as cofactor.

The catalysed reaction is 5-(2-hydroxyethyl)-4-methylthiazole + ATP = 4-methyl-5-(2-phosphooxyethyl)-thiazole + ADP + H(+). The protein operates within cofactor biosynthesis; thiamine diphosphate biosynthesis; 4-methyl-5-(2-phosphoethyl)-thiazole from 5-(2-hydroxyethyl)-4-methylthiazole: step 1/1. Catalyzes the phosphorylation of the hydroxyl group of 4-methyl-5-beta-hydroxyethylthiazole (THZ). The sequence is that of Hydroxyethylthiazole kinase from Nitratidesulfovibrio vulgaris (strain ATCC 29579 / DSM 644 / CCUG 34227 / NCIMB 8303 / VKM B-1760 / Hildenborough) (Desulfovibrio vulgaris).